Reading from the N-terminus, the 123-residue chain is Thioredoxin domain-containing protein 17 (123 aa).

The 83-residue stretch at 41-123 (SWCPDCVTAE…DLVRMMFTED (83 aa)) folds into the Thioredoxin domain. Residues C43 and C46 each act as nucleophile in the active site. Residues C43 and C46 are joined by a disulfide bond.

It belongs to the thioredoxin family. Predominantly expressed in liver, brain and muscle. Also expressed in kidney, intestine, skin, stomach, gill and head kidney.

Its subcellular location is the cytoplasm. In terms of biological role, disulfide reductase. May participate in various redox reactions through the reversible oxidation of its active center dithiol to a disulfide and catalyze dithiol-disulfide exchange reactions. Has peroxidase activity and may contribute to the elimination of cellular hydrogen peroxide. May function as an antioxidant involved in response to viral infection. The polypeptide is Thioredoxin domain-containing protein 17 (Epinephelus coioides (Orange-spotted grouper)).